Here is a 218-residue protein sequence, read N- to C-terminus: Cytochrome b6 (218 aa).

The chain crosses the membrane as a helical span at residues 35–55; sequence IFYCLGGITLVCFLIQFATGF. C38 contributes to the heme c binding site. H89 and H103 together coordinate heme b. The next 3 membrane-spanning stretches (helical) occupy residues 93–113, 119–139, and 189–209; these read ASMM…TGGF, LTWV…VTGY, and LHTF…FLMI. The heme b site is built by H190 and H205.

This sequence belongs to the cytochrome b family. PetB subfamily. In terms of assembly, the 4 large subunits of the cytochrome b6-f complex are cytochrome b6, subunit IV (17 kDa polypeptide, PetD), cytochrome f and the Rieske protein, while the 4 small subunits are PetG, PetL, PetM and PetN. The complex functions as a dimer. Heme b is required as a cofactor. The cofactor is heme c.

It is found in the cellular thylakoid membrane. Functionally, component of the cytochrome b6-f complex, which mediates electron transfer between photosystem II (PSII) and photosystem I (PSI), cyclic electron flow around PSI, and state transitions. This Prochlorococcus marinus (strain MIT 9515) protein is Cytochrome b6.